Reading from the N-terminus, the 275-residue chain is Prohibitin-1 (275 aa).

The AIM signature appears at 106–109 (YQNL).

This sequence belongs to the prohibitin family. The mitochondrial prohibitin complex consists of two subunits (PHB1 and PHB2). The subunits assemble into a membrane-associated ring-shaped supercomplex of approximately 1 mDa. Interacts with ATG24/SNX4; the interaction is direct and plays a role in mitophagy.

The protein localises to the mitochondrion inner membrane. In terms of biological role, prohibitin probably acts as a holdase/unfoldase for the stabilization of newly synthesized mitochondrial proteins. Involved in mitophagy. Required for the switch to necrotrophic growth. The protein is Prohibitin-1 of Colletotrichum higginsianum (strain IMI 349063) (Crucifer anthracnose fungus).